Consider the following 535-residue polypeptide: Phosphoenolpyruvate carboxykinase (ATP) (535 aa).

Substrate is bound by residues Arg59, Tyr201, and Lys207. ATP is bound by residues Lys207, His226, and 243-251; that span reads GLSGTGKTT. Positions 207 and 226 each coordinate Mn(2+). Residue Asp264 coordinates Mn(2+). Residues Glu292, Arg328, 444–445, and Thr450 each bind ATP; that span reads RI. Position 328 (Arg328) interacts with substrate.

This sequence belongs to the phosphoenolpyruvate carboxykinase (ATP) family. Mn(2+) is required as a cofactor.

It localises to the cytoplasm. The enzyme catalyses oxaloacetate + ATP = phosphoenolpyruvate + ADP + CO2. Its pathway is carbohydrate biosynthesis; gluconeogenesis. Its function is as follows. Involved in the gluconeogenesis. Catalyzes the conversion of oxaloacetate (OAA) to phosphoenolpyruvate (PEP) through direct phosphoryl transfer between the nucleoside triphosphate and OAA. The chain is Phosphoenolpyruvate carboxykinase (ATP) from Bacteroides thetaiotaomicron (strain ATCC 29148 / DSM 2079 / JCM 5827 / CCUG 10774 / NCTC 10582 / VPI-5482 / E50).